We begin with the raw amino-acid sequence, 102 residues long: Small ribosomal subunit protein uS10 (102 aa).

The protein belongs to the universal ribosomal protein uS10 family. As to quaternary structure, part of the 30S ribosomal subunit.

Functionally, involved in the binding of tRNA to the ribosomes. The chain is Small ribosomal subunit protein uS10 from Syntrophus aciditrophicus (strain SB).